Consider the following 429-residue polypeptide: Adenylosuccinate synthetase (429 aa).

Residues 12-18 and 40-42 contribute to the GTP site; these read GDEGKGK and GHT. The active-site Proton acceptor is Asp-13. Residues Asp-13 and Gly-40 each contribute to the Mg(2+) site. Residues 13-16, 38-41, Thr-128, Arg-142, Gln-223, Thr-238, and Arg-302 contribute to the IMP site; these read DEGK and NAGH. His-41 (proton donor) is an active-site residue. Residue 298-304 participates in substrate binding; it reads TTTGRPR. Residues Arg-304, 330–332, and 412–414 contribute to the GTP site; these read SID and SVG.

The protein belongs to the adenylosuccinate synthetase family. Homodimer. Requires Mg(2+) as cofactor.

It localises to the cytoplasm. The catalysed reaction is IMP + L-aspartate + GTP = N(6)-(1,2-dicarboxyethyl)-AMP + GDP + phosphate + 2 H(+). Its pathway is purine metabolism; AMP biosynthesis via de novo pathway; AMP from IMP: step 1/2. In terms of biological role, plays an important role in the de novo pathway of purine nucleotide biosynthesis. Catalyzes the first committed step in the biosynthesis of AMP from IMP. This chain is Adenylosuccinate synthetase, found in Bacillus cytotoxicus (strain DSM 22905 / CIP 110041 / 391-98 / NVH 391-98).